Here is a 1738-residue protein sequence, read N- to C-terminus: Sodium leak channel NALCN (1738 aa).

The Cytoplasmic segment spans residues 1 to 36 (MLKRKQSSRVEAQPVTDFGPDESLSDNADILWINKP). Residues 37-57 (WVHSLLRICAIISVISVCMNT) form a helical membrane-spanning segment. The Extracellular segment spans residues 58–65 (PMTFEHYP). A helical transmembrane segment spans residues 66-90 (PLQYVTFTLDTLLMFLYTAEMIAKM). Over 91–106 (HIRGIVKGDSSYVKDR) the chain is Cytoplasmic. Residues 107–129 (WCVFDGFMVFCLWVSLVLQVFEI) form a helical membrane-spanning segment. Over 130-137 (ADIVDQMS) the chain is Extracellular. Residues 138–158 (PWGMLRIPRPLIMIRAFRIYF) traverse the membrane as a helical; Voltage-sensor segment. Topologically, residues 159–173 (RFELPRTRITNILKR) are cytoplasmic. The helical transmembrane segment at 174-199 (SGEQIWSVSIFLLFFLLLYGILGVQM) threads the bilayer. At 200-269 (FGTFTYHCVV…YSGFNEIGTS (70 aa)) the chain is on the extracellular side. Disulfide bonds link C207–C239 and C229–C245. 2 N-linked (GlcNAc...) asparagine glycosylation sites follow: N210 and N216. Positions 270–289 (IFTVYEASSQEGWVFLMYRA) form an intramembrane region, pore-forming. Residues 290 to 294 (IDSFP) lie on the Extracellular side of the membrane. The chain crosses the membrane as a helical span at residues 295–322 (RWRSYFYFITLIFFLAWLVKNVFIAVII). Residues 323–382 (ETFAEIRVQFQQMWGTRSSTTSTATTQMFHEDAAGGWQLVAVDVNKPQGRAPACLQKMMR) lie on the Cytoplasmic side of the membrane. A helical membrane pass occupies residues 383 to 403 (SSVFHMFILSMVTVDVIVAAS). Over 404 to 416 (NYYKGENFRRQYD) the chain is Extracellular. Residues 417–439 (EFYLAEVAFTVLFDLEALLKIWC) form a helical membrane-spanning segment. At 440–447 (LGFTGYIS) the chain is on the cytoplasmic side. The helical transmembrane segment at 448 to 468 (SSLHKFELLLVIGTTLHVYPD) threads the bilayer. The Extracellular segment spans residues 469 to 472 (LYHS). Residues 473-492 (QFTYFQVLRVVRLIKISPAL) form a helical; Voltage-sensor membrane-spanning segment. Residues 493-502 (EDFVYKIFGP) lie on the Cytoplasmic side of the membrane. A helical membrane pass occupies residues 503–530 (GKKLGSLVVFTASLLIVMSAISLQMFCF). At 531–543 (VEELDRFTTFPRA) the chain is on the extracellular side. An intramembrane region (pore-forming) is located at residues 544-563 (FMSMFQILTQEGWVDVMDQT). Topologically, residues 564-578 (LNAVGHMWAPLVAIY) are extracellular. A helical membrane pass occupies residues 579–599 (FILYHLFATLILLSLFVAVIL). The Cytoplasmic segment spans residues 600 to 886 (DNLELDEDLK…QLYDLLGLVT (287 aa)). A disordered region spans residues 762–785 (QERRSLRHGSNSQRISRGKSLETL). A coiled-coil region spans residues 795-830 (YRNAQREDSEIKMIQEKKEQAEMKRKVQEEELRENH). A helical membrane pass occupies residues 887–906 (YLDWVMITVTICSCISMMFE). The Extracellular portion of the chain corresponds to 907–915 (SPFRRVMHA). The chain crosses the membrane as a helical span at residues 916–939 (PTLQIAEYVFVIFMSIELNLKIMA). The Cytoplasmic segment spans residues 940–947 (DGLFFTPT). Residues 948–972 (AVIRDFGGVMDIFIYLVSLIFLCWM) traverse the membrane as a helical segment. Topologically, residues 973–980 (PQNVPAES) are extracellular. A helical; Voltage-sensor transmembrane segment spans residues 981 to 1003 (GAQLLMVLRCLRPLRIFKLVPQM). Topologically, residues 1004–1015 (RKVVRELFSGFK) are cytoplasmic. The chain crosses the membrane as a helical span at residues 1016-1039 (EIFLVSILLLTLMLVFASFGVQLF). The Extracellular portion of the chain corresponds to 1040–1104 (AGKLAKCNDP…NFNFDNVGNA (65 aa)). A disulfide bond links C1046 and C1057. N-linked (GlcNAc...) asparagine glycosylation is present at N1064. The segment at residues 1105–1124 (MLALFEVLSLKGWVEVRDVI) is an intramembrane region (pore-forming). The Extracellular segment spans residues 1125 to 1129 (IHRVG). The chain crosses the membrane as a helical span at residues 1130-1159 (PIHGIYIHVFVFLGCMIGLTLFVGVVIANF). The Cytoplasmic segment spans residues 1160-1210 (NENKGTALLTVDQRRWEDLKSRLKIAQPLHLPPRPDNDGFRAKMYDITQHP). Residues 1211–1227 (FFKRTIALLVLAQSVLL) form a helical membrane-spanning segment. Residues 1228–1236 (SVKWDVDDP) lie on the Extracellular side of the membrane. Residues 1237 to 1260 (VTVPLATMSVVFTFIFVLEVTMKI) form a helical membrane-spanning segment. Over 1261–1271 (IAMSPAGFWQS) the chain is Cytoplasmic. The chain crosses the membrane as a helical span at residues 1272–1293 (RRNRYDLLVTSLGVVWVVLHFA). Residues 1294–1296 (LLN) lie on the Extracellular side of the membrane. The helical; Voltage-sensor transmembrane segment at 1297 to 1318 (AYTYMMGACVIVFRFFSICGKH) threads the bilayer. The Cytoplasmic portion of the chain corresponds to 1319–1331 (VTLKMLLLTVVVS). The chain crosses the membrane as a helical span at residues 1332 to 1357 (MYKSFFIIVGMFLLLLCYAFAGVVLF). The Extracellular portion of the chain corresponds to 1358–1378 (GTVKYGENINRHANFSSAGKA). Residues 1379-1398 (ITVLFRIVTGEDWNKIMHDC) constitute an intramembrane region (pore-forming). The Extracellular portion of the chain corresponds to 1399–1420 (MVQPPFCTPDEFTYWATDCGNY). A disulfide bond links C1405 and C1417. Residues 1421–1447 (AGALMYFCSFYVIIAYIMLNLLVAIIV) form a helical membrane-spanning segment. Residues 1448 to 1738 (ENFSLFYSTE…DESGDDLLDI (291 aa)) are Cytoplasmic-facing. The segment at 1602–1679 (EQERSRFLNP…WRLPSAPKPI (78 aa)) is disordered. Residues 1613–1631 (SIETTQPSEDSNANSQDHS) show a composition bias toward polar residues. The span at 1633–1648 (QPETSSQQQLLSPTLS) shows a compositional bias: low complexity.

Belongs to the NALCN family. Found in a complex with NALCN, UNC79, UNC80 and NACL1; these auxiliary subunits are indispensable for the function of the NALCN channel. Interacts with UNC80; required for the NALCN activation/inhibition by GPCRs in neurons. Found in a complex with NALCN, UNC79 and UNC80; UNC80 bridges NALCN to UNC79. Interacts with CHRM3. Post-translationally, phosphorylated on tyrosine residues. In terms of tissue distribution, widely expressed in the brain and spinal cord neurons. Expressed also in pancreatic islet cells.

The protein localises to the cell membrane. The catalysed reaction is Na(+)(in) = Na(+)(out). Inhibited by low micromolar concentrations of Gd(3+) and high micromolar concentrations of verapamil. Insensitive to tetrodotoxin (TTX) and potentiated by low external Ca(2+) concentration. In terms of biological role, voltage-gated ion channel responsible for the resting Na(+) permeability that controls neuronal excitability. NALCN channel functions as a multi-protein complex, which consists at least of NALCN, NALF1, UNC79 and UNC80. NALCN is the voltage-sensing, pore-forming subunit of the NALCN channel complex. NALCN channel complex is constitutively active and conducts monovalent cations but is blocked by physiological concentrations of extracellular divalent cations. In addition to its role in regulating neuronal excitability, is required for normal respiratory rhythm, systemic osmoregulation by controlling the serum sodium concentration and in the regulation of the intestinal pace-making activity in the interstitial cells of Cajal. Plays a critical role in both maintenance of spontaneous firing of substantia nigra pars reticulata (SNr) neurons and physiological modulation of SNr neuron excitability. NALCN channel is also activated by neuropeptides such as neurotensin and substance P (SP) through a SRC family kinases-dependent pathway. In addition, NALCN activity is enhanced/modulated by several GPCRs, such as CHRM3. The protein is Sodium leak channel NALCN (Nalcn) of Mus musculus (Mouse).